We begin with the raw amino-acid sequence, 1537 residues long: Leucine-rich repeat-containing protein 7 (1537 aa).

LRR repeat units follow at residues 23–44 (IISVLDYSHCSLQQVPKEVFNF), 47–68 (TLEELYLDANQIEELPKQLFNC), 70–91 (ALRKLSIPDNDLSNLPTTIASL), 93–114 (NLKELDISKNGVQEFPENIKCC), 116–137 (CLTIIEASVNPISKLPDGFTQL), 139–161 (NLTQLYLNDAFLEFLPANFGRLV), 162–183 (KLRILELRENHLKTLPKSMHKL), 185–206 (QLERLDLGNNEFGELPEVLDQI), 208–229 (NLRELWMDNNALQVLPGSIGKL), 231–253 (MLVYLDMSKNRIETVDMDISGCE), 254–275 (ALEDLLLSSNMLQQLPDSIGLL), 277–298 (KLTTLKVDDNQLTMLPNTIGNL), 300–321 (LLEEFDCSCNELESLPSTIGYL), 323–344 (SLRTLAVDENFLPELPREIGSC), 346–367 (NVTVMSLRSNKLEFLPEEIGQM), 369–391 (KLRVLNLSDNRLKNLPFSFTKLK), and 392–413 (ELAALWLSDNQSKALIPLQTEA). S439, S441, and S443 each carry phosphoserine. Over residues 663-676 (KKESTDESEVDKTH) the composition is skewed to basic and acidic residues. Disordered regions lie at residues 663 to 709 (KKES…VGSL), 730 to 759 (FPQPLDSKPLLSQREAVPPGNIPQRPDRLP), 786 to 810 (AENANSNPLLSSKSRSTSSHGRRPL), and 824 to 892 (EQST…SPGV). Positions 677–709 (CLNNSVSSGTYSDYSPSQASSGSSNTRVKVGSL) are enriched in polar residues. Residues 790–804 (NSNPLLSSKSRSTSS) show a composition bias toward low complexity. Residue T831 is modified to Phosphothreonine. S850 bears the Phosphoserine mark. Over residues 859–871 (PSKLETTPTTSPL) the composition is skewed to low complexity. The residue at position 865 (T865) is a Phosphothreonine. S869 bears the Phosphoserine mark. Residues 872-882 (PERKEHIKEST) are compositionally biased toward basic and acidic residues. A phosphoserine mark is found at S947, S949, and S1118. Residues 1136–1159 (ELPPTDRYGRPPYRGGLDRQSSVT) form a disordered region. An Omega-N-methylarginine modification is found at R1149. S1233 carries the post-translational modification Phosphoserine. Disordered stretches follow at residues 1234-1265 (DYNLGNYGDKPSDNSDLKTRPTPVKGEESCGK) and 1331-1360 (QKTPSQQSNILDNGQEDVSPSGQWNPYPLG). A compositionally biased stretch (basic and acidic residues) spans 1243 to 1263 (KPSDNSDLKTRPTPVKGEESC). The segment covering 1332–1354 (KTPSQQSNILDNGQEDVSPSGQW) has biased composition (polar residues). A phosphoserine mark is found at S1335 and S1439. The 91-residue stretch at 1445–1535 (EQFCVRIEKN…TVDLVIQREL (91 aa)) folds into the PDZ domain.

It belongs to the LAP (LRR and PDZ) protein family. In terms of assembly, interacts with CNKSR2 and DLG4. Interacts with CTNND2/Catenin delta-2. Forms a complex with N-cadherin through CTNND2. Interacts with CAMK2A. In terms of tissue distribution, brain-specific. Isoform 3 is ubiquitously expressed.

The protein resides in the cytoplasm. It localises to the postsynaptic density. Required for normal synaptic spine architecture and function. Necessary for DISC1 and GRM5 localization to postsynaptic density complexes and for both N-methyl D-aspartate receptor-dependent and metabotropic glutamate receptor-dependent long term depression. The protein is Leucine-rich repeat-containing protein 7 (LRRC7) of Homo sapiens (Human).